The sequence spans 51 residues: Ribosome biogenesis protein Nop10 (51 aa).

The protein belongs to the NOP10 family.

Involved in ribosome biogenesis; more specifically in 18S rRNA pseudouridylation and in cleavage of pre-rRNA. The polypeptide is Ribosome biogenesis protein Nop10 (Methanococcus maripaludis (strain C5 / ATCC BAA-1333)).